Here is a 291-residue protein sequence, read N- to C-terminus: Halorhodopsin (291 aa).

Over 1 to 30 the chain is Extracellular; sequence MTETLPPVTESAVALQAEVTQRELFEFVLN. A helical transmembrane segment spans residues 31 to 56; that stretch reads DPLLASSLYINIALAGLSILLFVFMT. Topologically, residues 57 to 62 are cytoplasmic; it reads RGLDDP. Residues 63–86 form a helical membrane-spanning segment; it reads RAKLIAVSTILVPVVSIASYTGLA. Topologically, residues 87–120 are extracellular; sequence SGLTISVLEMPAGHFAEGSSVMLGGEEVDGVVTM. Residues 121–142 traverse the membrane as a helical segment; the sequence is WGRYLTWALSTPMILLALGLLA. Residues 143 to 145 lie on the Cytoplasmic side of the membrane; the sequence is GSN. The helical transmembrane segment at 146–169 threads the bilayer; it reads ATKLFTAITFDIAMCVTGLAAALT. Topologically, residues 170–172 are extracellular; that stretch reads TSS. The helical transmembrane segment at 173 to 195 threads the bilayer; that stretch reads HLMRWFWYAISCACFLVVLYILL. At 196–207 the chain is on the cytoplasmic side; the sequence is VEWAQDAKAAGT. Residues 208–231 form a helical membrane-spanning segment; that stretch reads ADMFNTLKLLTVVMWLGYPIVWAL. At 232-240 the chain is on the extracellular side; that stretch reads GVEGIAVLP. The helical transmembrane segment at 241–269 threads the bilayer; it reads VGVTSWGYSFLDIVAKYIFAFLLLNYLTS. N6-(retinylidene)lysine is present on Lys256. The Cytoplasmic segment spans residues 270–291; the sequence is NESVVSGSILDVPSASGTPADD.

Belongs to the archaeal/bacterial/fungal opsin family.

Its subcellular location is the cell membrane. Light-driven anion pump. Binding affinity for the anions is in the order, bromide &gt; chloride &gt; nitrate &gt; azide &gt; bromate and binding is pH dependent. In Natronomonas pharaonis (Natronobacterium pharaonis), this protein is Halorhodopsin (hop).